The sequence spans 262 residues: Apolipoprotein A-I (262 aa).

The signal sequence occupies residues 1 to 18 (MKFLALALTILLAAATQA). The interval 32-63 (VKVAMMEYMAQVKETGQRSIDLLDDTEFKEYK) is 3 X approximate tandem repeats. Repeat copies occupy residues 64-85 (VQLS…QSLA) and 87-107 (YSEA…AEVM). A 10 X approximate tandem repeats region spans residues 64–262 (VQLSQSLDNL…YETISQAMKA (199 aa)). A 3; half-length repeat occupies 108 to 118 (KDVEDVRTQLE). Tandem repeats lie at residues 119–140 (PKRA…KKLE), 141–162 (PLIK…VKME), 163–184 (PVVE…AKLM), 185–206 (PIVE…TLAA), and 207–228 (PYAE…EKVG). One copy of the 9; half-length repeat lies at 229-239 (PLTNDFKGQVG). Copy 10 of the repeat occupies 240 to 262 (PAAEQAKEKLMDFYETISQAMKA).

It belongs to the apolipoprotein A1/A4/E family.

It localises to the secreted. Functionally, participates in the reverse transport of cholesterol from tissues to the liver for excretion by promoting cholesterol efflux from tissues and by acting as a cofactor for the lecithin cholesterol acyltransferase (LCAT). The sequence is that of Apolipoprotein A-I (apoa1) from Salmo trutta (Brown trout).